A 396-amino-acid polypeptide reads, in one-letter code: Phosphoglycerate kinase (396 aa).

Residues 21-23, Arg36, 59-62, Arg119, and Arg156 contribute to the substrate site; these read DFN and HLGK. Residues Lys206, Glu325, and 352–355 each bind ATP; that span reads GGDS.

This sequence belongs to the phosphoglycerate kinase family. In terms of assembly, monomer.

The protein resides in the cytoplasm. It carries out the reaction (2R)-3-phosphoglycerate + ATP = (2R)-3-phospho-glyceroyl phosphate + ADP. It participates in carbohydrate degradation; glycolysis; pyruvate from D-glyceraldehyde 3-phosphate: step 2/5. This Staphylococcus saprophyticus subsp. saprophyticus (strain ATCC 15305 / DSM 20229 / NCIMB 8711 / NCTC 7292 / S-41) protein is Phosphoglycerate kinase.